Here is a 486-residue protein sequence, read N- to C-terminus: Probable glycine dehydrogenase (decarboxylating) subunit 2 (486 aa).

The tract at residues 1–26 (MLIFESSRPGRQARAQAPKPTAATND) is disordered. An N6-(pyridoxal phosphate)lysine modification is found at lysine 264.

This sequence belongs to the GcvP family. C-terminal subunit subfamily. As to quaternary structure, the glycine cleavage system is composed of four proteins: P, T, L and H. In this organism, the P 'protein' is a heterodimer of two subunits. Pyridoxal 5'-phosphate is required as a cofactor.

The catalysed reaction is N(6)-[(R)-lipoyl]-L-lysyl-[glycine-cleavage complex H protein] + glycine + H(+) = N(6)-[(R)-S(8)-aminomethyldihydrolipoyl]-L-lysyl-[glycine-cleavage complex H protein] + CO2. Functionally, the glycine cleavage system catalyzes the degradation of glycine. The P protein binds the alpha-amino group of glycine through its pyridoxal phosphate cofactor; CO(2) is released and the remaining methylamine moiety is then transferred to the lipoamide cofactor of the H protein. This chain is Probable glycine dehydrogenase (decarboxylating) subunit 2, found in Nitrosococcus oceani (strain ATCC 19707 / BCRC 17464 / JCM 30415 / NCIMB 11848 / C-107).